The chain runs to 374 residues: Regulator of G-protein signaling 20 (374 aa).

Residues 1-11 (MPRLSQDNQQG) show a composition bias toward polar residues. 2 disordered regions span residues 1 to 21 (MPRLSQDNQQGHQKHFSRPSR) and 135 to 158 (PPGGRLPREVDASAGQSSSIPPMG). Positions 12-21 (HQKHFSRPSR) are enriched in basic residues. The 117-residue stretch at 248-364 (SFDKLMLTPA…MNSALYKDLL (117 aa)) folds into the RGS domain.

In terms of assembly, forms a complex with G(alpha)z/i2 subunits and mu-opioid receptors; the formation of this complex results in mu-opioid receptor desensitization. Interacts with OPRM1. Fatty acylated. Heavily palmitoylated in the cysteine string motif. In terms of processing, N- and O-glycosylated in synapsomal membranes. Post-translationally, serine phosphorylated in synapsomal membranes. Sumoylated with SUMO1 and SUMO2 in synaptosomes. The sumoylated forms act as a scaffold for sequestering mu-opioid receptor-activated G(alpha) subunits. As to expression, retinal-specific. Expressed throughout the retina, including photoreceptors.

It localises to the membrane. The protein resides in the nucleus. The protein localises to the cytoplasm. In terms of biological role, inhibits signal transduction by increasing the GTPase activity of G protein alpha subunits thereby driving them into their inactive GDP-bound form. Binds selectively to G(z)-alpha and G(alpha)-i2 subunits, accelerates their GTPase activity and regulates their signaling activities. The G(z)-alpha activity is inhibited by the phosphorylation and palmitoylation of the G-protein. Negatively regulates mu-opioid receptor-mediated activation of the G-proteins. This is Regulator of G-protein signaling 20 (RGS20) from Bos taurus (Bovine).